The chain runs to 540 residues: NEDD8-activating enzyme E1 regulatory subunit AXR1 (540 aa).

Belongs to the ubiquitin-activating E1 family. ULA1 subfamily. As to quaternary structure, heterodimer of ECR1 and AXR1. The complex binds to RUB1/NEDD8 and RCE1. Expressed in shoot, root and floral meristems, in vascular tissues of cotyledons and mature leaves, and in the stele of the root. Expressed at higher levels on the lower side of an emerging root during germination and at higher levels on the underside of the apical hook.

The protein resides in the nucleus. The protein operates within protein modification; protein neddylation. In terms of biological role, regulatory subunit of the dimeric ECR1-AXR1 E1 enzyme. E1 activates RUB1/NEDD8 by first adenylating its C-terminal glycine residue with ATP, thereafter linking this residue to the side chain of the catalytic cysteine, yielding a RUB1-ECR1 thioester and free AMP. E1 finally transfers RUB1 to the catalytic cysteine of RCE1. Plays an important role in auxin response. Regulates the chromosomal localization of meiotic recombination by crossovers (COs) and subsequent synapsis, probably through the activation of a CRL4 complex. Required for E3-mediated protein degradation in response to auxin, jasmonic acid and cold stress. Required for the COP1-COP10-CSN-mediated repression of photomorphogenesis in the dark. May function redundantly with AXL1 in the RUB conjugating pathway. Seems not to be functionally equivalent to AXL1 in vivo. The chain is NEDD8-activating enzyme E1 regulatory subunit AXR1 from Arabidopsis thaliana (Mouse-ear cress).